Reading from the N-terminus, the 506-residue chain is uncharacterized protein (506 aa).

To group II intron maturases.

Its subcellular location is the plastid. It is found in the chloroplast. This is an uncharacterized protein from Euglena gracilis.